The sequence spans 330 residues: Probable L-lactate dehydrogenase (330 aa).

Positions 105, 137, and 168 each coordinate substrate. Asparagine 137 is an NAD(+) binding site. Histidine 192 functions as the Proton acceptor in the catalytic mechanism.

The protein belongs to the LDH/MDH superfamily. LDH family. In terms of assembly, homotetramer.

Its subcellular location is the cytoplasm. It catalyses the reaction (S)-lactate + NAD(+) = pyruvate + NADH + H(+). Its pathway is fermentation; pyruvate fermentation to lactate; (S)-lactate from pyruvate: step 1/1. This Schizosaccharomyces pombe (strain 972 / ATCC 24843) (Fission yeast) protein is Probable L-lactate dehydrogenase.